Consider the following 557-residue polypeptide: Pre-mRNA-processing protein 45 (557 aa).

Disordered stretches follow at residues 1–32 (MALL…TSHA), 208–243 (EQDP…KVSA), and 316–444 (MAEK…MSSD). Residues 16 to 25 (DFDDEEEDYV) show a composition bias toward acidic residues. Residues 224 to 235 (RGPPSPPPPVLH) show a composition bias toward pro residues. Ser228 and Ser236 each carry phosphoserine. The segment covering 316–327 (MAEKEKQEKEQR) has biased composition (basic and acidic residues). Residue Ser376 is modified to Phosphoserine. Basic and acidic residues predominate over residues 386-430 (EAFRRRQELRRERRRQAEKDLRLSRMGAEKRAKLAEKDRPRDVAE).

It belongs to the SNW family. Homodimer. Interacts with cyp1 and the small 23 kDa subunit of the splicing factor U2AF (u2af23). Belongs to the 40S cdc5-associated complex (or cwf complex), a spliceosome sub-complex reminiscent of a late-stage spliceosome composed of the U2, U5 and U6 snRNAs and at least brr2, cdc5, cwf2/prp3, cwf3/syf1, cwf4/syf3, cwf5/ecm2, spp42/cwf6, cwf7/spf27, cwf8, cwf9, cwf10, cwf11, cwf12, prp45/cwf13, cwf14, cwf15, cwf16, cwf17, cwf18, cwf19, cwf20, cwf21, cwf22, cwf23, cwf24, cwf25, cwf26, cyp7/cwf27, cwf28, cwf29/ist3, lea1, msl1, prp5/cwf1, prp10, prp12/sap130, prp17, prp22, sap61, sap62, sap114, sap145, slu7, smb1, smd1, smd3, smf1, smg1 and syf2.

It is found in the nucleus. Involved in pre-mRNA splicing. The polypeptide is Pre-mRNA-processing protein 45 (prp45) (Schizosaccharomyces pombe (strain 972 / ATCC 24843) (Fission yeast)).